A 232-amino-acid chain; its full sequence is Ion-translocating oxidoreductase complex subunit E (232 aa).

5 helical membrane-spanning segments follow: residues 39 to 59 (LGLG…ISSL), 69 to 89 (IPIY…LINA), 92 to 112 (FGLY…CIVV), 125 to 145 (ALSA…MFVL), and 182 to 202 (PFLL…MLAV).

It belongs to the NqrDE/RnfAE family. The complex is composed of six subunits: RnfA, RnfB, RnfC, RnfD, RnfE and RnfG.

The protein resides in the cell inner membrane. Its function is as follows. Part of a membrane-bound complex that couples electron transfer with translocation of ions across the membrane. This chain is Ion-translocating oxidoreductase complex subunit E, found in Klebsiella pneumoniae (strain 342).